We begin with the raw amino-acid sequence, 359 residues long: Peptide chain release factor 1 (359 aa).

Gln238 carries the N5-methylglutamine modification.

The protein belongs to the prokaryotic/mitochondrial release factor family. In terms of processing, methylated by PrmC. Methylation increases the termination efficiency of RF1.

It is found in the cytoplasm. Its function is as follows. Peptide chain release factor 1 directs the termination of translation in response to the peptide chain termination codons UAG and UAA. The polypeptide is Peptide chain release factor 1 (Mycoplasmopsis pulmonis (strain UAB CTIP) (Mycoplasma pulmonis)).